A 251-amino-acid polypeptide reads, in one-letter code: Tachykinins (251 aa).

An N-terminal signal peptide occupies residues 1–21; the sequence is MGAPRTCLIFITIQLVSLAYA. A propeptide spanning residues 22 to 25 is cleaved from the precursor; that stretch reads QEVS. Arginine amide is present on arginine 36. The propeptide occupies 39 to 50; that stretch reads KYFDEEGIEQFY. Position 61 is a lysine amide (lysine 61). Residues 65-163 constitute a propeptide that is removed on maturation; it reads SLQDILEAPE…MEPEQSNDLD (99 aa). Position 176 is an arginine amide (arginine 176). Positions 180 to 183 are excised as a propeptide; sequence SINN. Position 199 is an arginine amide (arginine 199). Residues 203 to 223 constitute a propeptide that is removed on maturation; sequence DLKNSNAHEIKFLVDQNGPLP. Arginine 235 carries the post-translational modification Arginine amide. Positions 239–251 are excised as a propeptide; sequence WTDEPSLEMDMPN.

It belongs to the tachykinin family. In terms of tissue distribution, tachykinin-related peptide 1: Expressed in antennal lobe (AL) and gnathal ganglion (GNG) (at protein level). Expression in AL detected in all animals, in GNG in most animals (at protein level). Not expressed in corpora cardiaca (CC) and corpora allata (CA) (at protein level). Tachykinin-related peptide 2: Expressed in antennal lobe (AL) corpora cardiaca (CC) and corpora allata (CA) with expression detected in few animals (at protein level). Not expressed in gnathal ganglion (GNG) (at protein level). Tachykinin-related peptide 4: Expressed in corpora cardiaca (CC), corpora allata (CA), antennal lobe (AL) and gnathal ganglion (GNG) (at protein level). Expression in AL and GNG detected in most animals, in CC and CA detected in few animals (at protein level). Tachykinin-related peptide 5: Expressed in corpora cardiaca (CC), corpora allata (CA), antennal lobe (AL) and gnathal ganglion (GNG) (at protein level). Expression in CC and CA detected in some animals, in AL and GNG in few animals (at protein level). Tachykinin-related peptide 6: Expressed in antennal lobe (AL) and gnathal ganglion (GNG) (at protein level). Expression in AL detected in all animals, in GNG in some animals (at protein level). Not expressed in corpora cardiaca (CC) and corpora allata (CA) (at protein level).

The protein localises to the secreted. Its function is as follows. Tachykinins are active peptides which excite neurons, evoke behavioral responses, are potent vasodilators and secretagogues, and contract (directly or indirectly) many smooth muscles. The sequence is that of Tachykinins from Agrotis ipsilon (Black cutworm moth).